A 153-amino-acid chain; its full sequence is Small ribosomal subunit protein uS5c (153 aa).

One can recognise an S5 DRBM domain in the interval 11–74 (WQERVIQIRR…VDAKKQLINI (64 aa)).

The protein belongs to the universal ribosomal protein uS5 family. In terms of assembly, part of the 30S ribosomal subunit. Contacts protein S4.

The protein localises to the plastid. Its subcellular location is the chloroplast. Its function is as follows. With S4 and S12 plays an important role in translational accuracy. The polypeptide is Small ribosomal subunit protein uS5c (rps5) (Cyanidioschyzon merolae (strain NIES-3377 / 10D) (Unicellular red alga)).